Reading from the N-terminus, the 475-residue chain is B-type cell cycle switch protein ccs52A (475 aa).

Residues 1-29 form a disordered region; sequence MDGTGNRNPPPTSTVGDNSPPPEPSPESL. A PEST motif motif is present at residues 7–28; it reads RNPPPTSTVGDNSPPPEPSPES. 2 positions are modified to phosphoserine: Ser43 and Ser45. Residues 51-57 carry the C-box motif; the sequence is DRFIPSR. A CSM motif motif is present at residues 80-91; it reads AYTTLLRTALFG. Residue Thr99 is modified to Phosphothreonine. 2 positions are modified to phosphoserine: Ser144 and Ser155. WD repeat units lie at residues 166 to 203, 207 to 246, 249 to 289, 290 to 329, 332 to 374, 376 to 417, and 420 to 459; these read QDDF…VTKL, GVDD…KIRS, GHRL…SKLS, GHKS…PVLK, EHTA…HLSC, DTGS…KLAT, and GHTY…KSQN. Position 454 is a phosphoserine (Ser454).

This sequence belongs to the WD repeat CDC20/Fizzy family. As to expression, mostly expressed in nodules, and, to a lower extent, in root tips, stems, hypocotyls, leaves, flower buds and flowers.

It localises to the nucleus. It participates in protein modification; protein ubiquitination. In terms of biological role, component of the anaphase promoting complex/cyclosome (APC/C), a cell cycle-regulated E3 ubiquitin-protein ligase complex that controls progression through mitosis and the G1 phase of the cell cycle. Required to switch form cell proliferation to cell differentiation, endoreduplication and ploidy-dependent cell enlargement, including during nodulation, before nodule differentiation. Involved in root-knot nematode Meloidogyne incognita giant cells formation. This is B-type cell cycle switch protein ccs52A from Medicago truncatula (Barrel medic).